Reading from the N-terminus, the 333-residue chain is MGSLGDELSLGSIFGRGVSMNVVAVEKVDEHVKKLEEEKRKLESCQLELPLSLQILNDAILYLKDKRCSEMETQPLLKDFISVNKPIQGERGIELLKREELMREKKFQQWKANDDHTSKIKSKLEIKRNEEKSPMLLIPKVETGLGLGLSSSSIRRKGIVASCGFTSNSMPQPPTPAVPQQPAFLKQQALRKQRRCWNPELHRRFVDALQQLGGPGVATPKQIREHMQEEGLTNDEVKSHLQKYRLHIRKPNSNAEKQSAVVLGFNLWNSSAQDEEETCEGGESLKRSNAQSDSPQGPLQLPSTTTTTGGDSSMEDVEDAKSESFQLERLRSP.

The region spanning 189-249 (ALRKQRRCWN…HLQKYRLHIR (61 aa)) is the HTH myb-type domain. Positions 220 to 245 (PKQIREHMQEEGLTNDEVKSHLQKYR) form a DNA-binding region, H-T-H motif. The disordered stretch occupies residues 274–333 (DEEETCEGGESLKRSNAQSDSPQGPLQLPSTTTTTGGDSSMEDVEDAKSESFQLERLRSP). Over residues 287 to 303 (RSNAQSDSPQGPLQLPS) the composition is skewed to polar residues. The span at 319–333 (DAKSESFQLERLRSP) shows a compositional bias: basic and acidic residues.

Its subcellular location is the nucleus. Its function is as follows. Probable transcription factor involved in phosphate signaling in roots. This is Transcription factor HHO6 from Arabidopsis thaliana (Mouse-ear cress).